A 280-amino-acid chain; its full sequence is Four and a half LIM domains protein 3 (280 aa).

Ser2 is modified (N-acetylserine). The C4-type zinc finger occupies 7–31 (CAKCSESLYGRKYIQTDDGPYCVPC). 2 LIM zinc-binding domains span residues 40–92 (CAEC…CNDC) and 101–153 (CSAC…CVPC). N6-acetyllysine is present on Lys157. 2 consecutive LIM zinc-binding domains span residues 162 to 212 (CARC…CVTC) and 221 to 275 (CSSC…CQGC). N6-acetyllysine is present on Lys235.

Interacts with SOX15; the interaction recruits FHL3 to FOXK1 promoters where it acts as a transcriptional coactivator of FOXK1.

The protein localises to the nucleus. Its subcellular location is the cytoplasm. Functionally, recruited by SOX15 to FOXK1 promoters where it acts as a transcriptional coactivator of FOXK1. The sequence is that of Four and a half LIM domains protein 3 (FHL3) from Bos taurus (Bovine).